The sequence spans 112 residues: MQPGGAPDMSALLAQAQQMQQQLMAAQQEMAQAEVTGQAGGGLVVATVKGTGEVVGLQIDPKVVDPEDVETLQDLVIGAIEDASRKAQEVAAEKLGPLAGGLGGGLPGLPGF.

The protein belongs to the YbaB/EbfC family. As to quaternary structure, homodimer.

It localises to the cytoplasm. The protein resides in the nucleoid. Its function is as follows. Binds to DNA and alters its conformation. May be involved in regulation of gene expression, nucleoid organization and DNA protection. The protein is Nucleoid-associated protein RER_03900 of Rhodococcus erythropolis (strain PR4 / NBRC 100887).